Here is a 35-residue protein sequence, read N- to C-terminus: Photosystem II reaction center protein T (35 aa).

A helical transmembrane segment spans residues Ala3–Phe23.

Belongs to the PsbT family. As to quaternary structure, PSII is composed of 1 copy each of membrane proteins PsbA, PsbB, PsbC, PsbD, PsbE, PsbF, PsbH, PsbI, PsbJ, PsbK, PsbL, PsbM, PsbT, PsbY, PsbZ, Psb30/Ycf12, at least 3 peripheral proteins of the oxygen-evolving complex and a large number of cofactors. It forms dimeric complexes.

It localises to the plastid. The protein resides in the chloroplast thylakoid membrane. Found at the monomer-monomer interface of the photosystem II (PS II) dimer, plays a role in assembly and dimerization of PSII. PSII is a light-driven water plastoquinone oxidoreductase, using light energy to abstract electrons from H(2)O, generating a proton gradient subsequently used for ATP formation. In Welwitschia mirabilis (Tree tumbo), this protein is Photosystem II reaction center protein T.